Here is a 245-residue protein sequence, read N- to C-terminus: DNA polymerase sliding clamp (245 aa).

It belongs to the PCNA family. As to quaternary structure, homotrimer. The subunits circularize to form a toroid; DNA passes through its center. Replication factor C (RFC) is required to load the toroid on the DNA.

Sliding clamp subunit that acts as a moving platform for DNA processing. Responsible for tethering the catalytic subunit of DNA polymerase and other proteins to DNA during high-speed replication. The chain is DNA polymerase sliding clamp from Methanosarcina barkeri (strain Fusaro / DSM 804).